The following is a 1563-amino-acid chain: Integrator complex subunit 5-like protein (1563 aa).

Basic and acidic residues-rich tracts occupy residues 1–21 (MKEE…RNDN) and 31–44 (EDWR…KNEN). Disordered stretches follow at residues 1-63 (MKEE…YDDD), 102-208 (KKSK…NITY), and 270-310 (NSLN…QQNP). Residues 52 to 63 (GDSDDDDYYDDD) are compositionally biased toward acidic residues. 2 stretches are compositionally biased toward low complexity: residues 109-133 (TAAT…TATA) and 141-202 (NNLL…NNNN). The helical transmembrane segment at 350–370 (DSIINWSLSTLTIITRLLIIL) threads the bilayer. Residues 381 to 398 (QQQQQQQQQQQQQQQQQQ) show a composition bias toward low complexity. 4 disordered regions span residues 381–417 (QQQQ…RQPI), 466–498 (SKSS…SSKT), 637–694 (FDNN…DNSS), and 784–828 (ILNN…SQEI). A compositionally biased stretch (pro residues) spans 405-414 (FPPPPPPPLR). Low complexity-rich tracts occupy residues 468–496 (SSSS…SSSS), 639–686 (NNNN…NNNN), and 786–824 (NNNN…QQQQ). A helical membrane pass occupies residues 877 to 897 (IIIKLISLIGMDSIYSSLIIL). 2 disordered regions span residues 1154–1173 (SGNF…DEYG) and 1268–1303 (KQRM…DQNE). Residues 1160–1172 (GDDDDDEYGDDEY) show a composition bias toward acidic residues. The span at 1277–1288 (SIQQNGNINNEQ) shows a compositional bias: low complexity. The span at 1289 to 1303 (QQEEDDNDDADDQNE) shows a compositional bias: acidic residues.

It belongs to the Integrator subunit 5 family. Component of the Integrator complex. The core complex associates with protein phosphatase 2A subunits, to form the Integrator-PP2A (INTAC) complex.

The protein resides in the nucleus. The protein localises to the cytoplasm. Its subcellular location is the nucleus membrane. Component of the integrator complex, a multiprotein complex that terminates RNA polymerase II (Pol II) transcription in the promoter-proximal region of genes. The integrator complex provides a quality checkpoint during transcription elongation by driving premature transcription termination of transcripts that are unfavorably configured for transcriptional elongation: the complex terminates transcription by (1) catalyzing dephosphorylation of the C-terminal domain (CTD) of Pol II subunit polr2a, (2) degrading the exiting nascent RNA transcript via endonuclease activity and (3) promoting the release of Pol II from bound DNA. The integrator complex is also involved in terminating the synthesis of non-coding Pol II transcripts, such as enhancer RNAs (eRNAs), small nuclear RNAs (snRNAs), telomerase RNAs and long non-coding RNAs (lncRNAs). The protein is Integrator complex subunit 5-like protein of Dictyostelium discoideum (Social amoeba).